The chain runs to 310 residues: Acetylglutamate kinase (310 aa).

Substrate contacts are provided by residues 74–75, Arg-96, and Asn-201; that span reads GG.

Belongs to the acetylglutamate kinase family. ArgB subfamily.

It is found in the cytoplasm. The enzyme catalyses N-acetyl-L-glutamate + ATP = N-acetyl-L-glutamyl 5-phosphate + ADP. It functions in the pathway amino-acid biosynthesis; L-arginine biosynthesis; N(2)-acetyl-L-ornithine from L-glutamate: step 2/4. In terms of biological role, catalyzes the ATP-dependent phosphorylation of N-acetyl-L-glutamate. In Arthrobacter sp. (strain FB24), this protein is Acetylglutamate kinase.